A 263-amino-acid polypeptide reads, in one-letter code: 3-methyl-2-oxobutanoate hydroxymethyltransferase (263 aa).

Positions 45 and 84 each coordinate Mg(2+). 3-methyl-2-oxobutanoate-binding positions include 45 to 46 (DS), Asp84, and Lys112. Glu114 serves as a coordination point for Mg(2+). The active-site Proton acceptor is the Glu180.

This sequence belongs to the PanB family. As to quaternary structure, homodecamer; pentamer of dimers. The cofactor is Mg(2+).

The protein resides in the cytoplasm. It carries out the reaction 3-methyl-2-oxobutanoate + (6R)-5,10-methylene-5,6,7,8-tetrahydrofolate + H2O = 2-dehydropantoate + (6S)-5,6,7,8-tetrahydrofolate. It functions in the pathway cofactor biosynthesis; (R)-pantothenate biosynthesis; (R)-pantoate from 3-methyl-2-oxobutanoate: step 1/2. Catalyzes the reversible reaction in which hydroxymethyl group from 5,10-methylenetetrahydrofolate is transferred onto alpha-ketoisovalerate to form ketopantoate. The polypeptide is 3-methyl-2-oxobutanoate hydroxymethyltransferase (Enterobacter sp. (strain 638)).